A 91-amino-acid polypeptide reads, in one-letter code: Phosphocarrier protein NPr (91 aa).

Positions 3 to 90 (KLERQVTICN…ALVDAKFDEA (88 aa)) constitute an HPr domain. Catalysis depends on H17, which acts as the Pros-phosphohistidine intermediate.

This sequence belongs to the HPr family.

The protein localises to the cytoplasm. Its function is as follows. Component of the phosphoenolpyruvate-dependent nitrogen-metabolic phosphotransferase system (nitrogen-metabolic PTS), that seems to be involved in regulating nitrogen metabolism. The phosphoryl group from phosphoenolpyruvate (PEP) is transferred to the phosphoryl carrier protein NPr by enzyme I-Ntr. Phospho-NPr then transfers it to EIIA-Ntr. Could function in the transcriptional regulation of sigma-54 dependent operons in conjunction with the NPr (PtsO) and EIIA-Ntr (PtsN) proteins. The chain is Phosphocarrier protein NPr (ptsO) from Shewanella violacea (strain JCM 10179 / CIP 106290 / LMG 19151 / DSS12).